A 365-amino-acid chain; its full sequence is Peptide chain release factor 2 (365 aa).

Gln251 is subject to N5-methylglutamine.

Belongs to the prokaryotic/mitochondrial release factor family. Methylated by PrmC. Methylation increases the termination efficiency of RF2.

It localises to the cytoplasm. Peptide chain release factor 2 directs the termination of translation in response to the peptide chain termination codons UGA and UAA. This chain is Peptide chain release factor 2, found in Campylobacter jejuni subsp. jejuni serotype O:23/36 (strain 81-176).